We begin with the raw amino-acid sequence, 351 residues long: Photosystem II D2 protein (351 aa).

The helical transmembrane segment at 39–59 threads the bilayer; it reads TAYLAIGGWLTGTTFVTSWYT. His116 is a binding site for chlorophyll a. A helical membrane pass occupies residues 123–139; the sequence is GFMLRQFELARLIGIRP. Pheophytin a-binding residues include Gln128 and Asn141. Residues 151 to 164 form a helical membrane-spanning segment; sequence VFVSVFLLYPLGQS. His196 serves as a coordination point for chlorophyll a. A helical membrane pass occupies residues 206-226; it reads GALLSAIHGVTVENTLYEDGE. A plastoquinone is bound by residues His213 and Phe260. A Fe cation-binding site is contributed by His213. Fe cation is bound at residue His267. The chain crosses the membrane as a helical span at residues 277 to 293; that stretch reads GLWTSSIGIIGLALNLR.

The protein belongs to the reaction center PufL/M/PsbA/D family. In terms of assembly, PSII is composed of 1 copy each of membrane proteins PsbA, PsbB, PsbC, PsbD, PsbE, PsbF, PsbH, PsbI, PsbJ, PsbK, PsbL, PsbM, PsbT, PsbX, PsbY, PsbZ, Psb30/Ycf12, peripheral proteins PsbO, CyanoQ (PsbQ), PsbU, PsbV and a large number of cofactors. It forms dimeric complexes. The D1/D2 heterodimer binds P680, chlorophylls that are the primary electron donor of PSII, and subsequent electron acceptors. It shares a non-heme iron and each subunit binds pheophytin, quinone, additional chlorophylls, carotenoids and lipids. There is also a Cl(-1) ion associated with D1 and D2, which is required for oxygen evolution. The PSII complex binds additional chlorophylls, carotenoids and specific lipids. is required as a cofactor.

It is found in the host cellular thylakoid membrane. The enzyme catalyses 2 a plastoquinone + 4 hnu + 2 H2O = 2 a plastoquinol + O2. Its function is as follows. Photosystem II (PSII) is a light-driven water:plastoquinone oxidoreductase that uses light energy to abstract electrons from H(2)O, generating O(2) and a proton gradient subsequently used for ATP formation. It consists of a core antenna complex that captures photons, and an electron transfer chain that converts photonic excitation into a charge separation. The D1/D2 (PsbA/PsbD) reaction center heterodimer binds P680, the primary electron donor of PSII as well as several subsequent electron acceptors. D2 is needed for assembly of a stable PSII complex. The polypeptide is Photosystem II D2 protein (psbD) (Synechococcus).